Reading from the N-terminus, the 350-residue chain is MPVLHNLVSNEELKARMLAETEPRTTVSFYKYFTIEDPRAFRDALYVALTRLKVFGRVYVAAEGINAQVSVPASLYEEMKATLYGFHPALDKLRMNIALDDDGKSFWVLRLKVRERIVADGITDESFDASDVGAYLKAAEVNAMLDDPEAVFVDMRNHYEYEVGHFDNALEIPADTFRDQLPMAVDMLEQDKDKKIVMYCTGGIRCEKASAWMRHNGYENVYHIEGGIIEYARRAREQGLPVRFKGKNFVFDERMGERISDDVIAHCHQCGEPCDNHVNCLNDGCHLLFIQCPACAVKFNHCCSPLCMEELALTPEEQRARRAGRENGNKIFNKSRGLLSTTMHIPSPKE.

The region spanning 146–240 is the Rhodanese domain; it reads DDPEAVFVDM…YARRAREQGL (95 aa). C200 serves as the catalytic Cysteine persulfide intermediate.

It belongs to the TrhO family.

The catalysed reaction is uridine(34) in tRNA + AH2 + O2 = 5-hydroxyuridine(34) in tRNA + A + H2O. Functionally, catalyzes oxygen-dependent 5-hydroxyuridine (ho5U) modification at position 34 in tRNAs. The polypeptide is tRNA uridine(34) hydroxylase (Erwinia tasmaniensis (strain DSM 17950 / CFBP 7177 / CIP 109463 / NCPPB 4357 / Et1/99)).